The following is a 65-amino-acid chain: Large ribosomal subunit protein bL35 (65 aa).

Composition is skewed to basic residues over residues 1–18 (MPKM…KRTA), 31–44 (HRFH…RRQL), and 55–65 (VKRYKKMIPAK). The interval 1-65 (MPKMKTKSAA…KRYKKMIPAK (65 aa)) is disordered.

It belongs to the bacterial ribosomal protein bL35 family.

This is Large ribosomal subunit protein bL35 from Limosilactobacillus fermentum (strain NBRC 3956 / LMG 18251) (Lactobacillus fermentum).